We begin with the raw amino-acid sequence, 1546 residues long: Hybrid signal transduction histidine kinase D (1546 aa).

A coiled-coil region spans residues 36–63 (MRKQKPDHEKTREELIEEINHLRAVSNS). The PAS domain maps to 65-131 (KNARIMLDEM…NIDNVREAVH (67 aa)). Residues 139–193 (IRYETEIFGKSAGTEKITIDFSLMPLFNDKGEVSLILPEGRNITEKRLGELEIER) enclose the PAC domain. A Histidine kinase 1 domain is found at 218–440 (NVSHELRTPL…QFTLRLPLTP (223 aa)). H221 carries the phosphohistidine; by autocatalysis modification. A Response regulatory 1 domain is found at 571 to 686 (IVLVVEDNPE…ELVARVVNLM (116 aa)). D619 is modified (4-aspartylphosphate). The Histidine kinase 2 domain occupies 747–1010 (NLSHELRTPL…QFTVVLPIIK (264 aa)). Position 750 is a phosphohistidine; by autocatalysis (H750). Low complexity-rich tracts occupy residues 1013–1031 (SSSN…SPPL) and 1042–1146 (NYIN…SNNN). 3 disordered regions span residues 1013-1148 (SSSN…NNEK), 1266-1285 (NNSN…PPSS), and 1313-1350 (PLSE…KANS). Low complexity predominate over residues 1313–1346 (PLSELKSSSNNNNNNNNNSNNNNNNSMSPNLRSP). The Response regulatory 2 domain maps to 1359-1483 (QIMLVDDLEE…ELSNSILTLI (125 aa)). Position 1412 is a 4-aspartylphosphate (D1412). The tract at residues 1500–1546 (QNNNNNNNNNNNNNNNNNNNNNNINNGNDDDSLLLTDSRPCKKANSQ) is disordered. Over residues 1501–1526 (NNNNNNNNNNNNNNNNNNNNNNINNG) the composition is skewed to low complexity.

The catalysed reaction is ATP + protein L-histidine = ADP + protein N-phospho-L-histidine.. Acts as a receptor histidine kinase for a signal transduction pathway. This protein undergoes an ATP-dependent autophosphorylation at a conserved histidine residue in the kinase core, and a phosphoryl group is then transferred to a conserved aspartate residue in the receiver domain. The chain is Hybrid signal transduction histidine kinase D (dhkD) from Dictyostelium discoideum (Social amoeba).